Reading from the N-terminus, the 554-residue chain is Urocanate hydratase (554 aa).

NAD(+) is bound by residues 51 to 52, Q129, 175 to 177, E195, R200, 241 to 242, 262 to 266, 272 to 273, and Y321; these read GG, GMG, NA, QTSAH, and YL. C409 is an active-site residue. G491 is a binding site for NAD(+).

The protein belongs to the urocanase family. Requires NAD(+) as cofactor.

The protein localises to the cytoplasm. It carries out the reaction 4-imidazolone-5-propanoate = trans-urocanate + H2O. It functions in the pathway amino-acid degradation; L-histidine degradation into L-glutamate; N-formimidoyl-L-glutamate from L-histidine: step 2/3. Its function is as follows. Catalyzes the conversion of urocanate to 4-imidazolone-5-propionate. This chain is Urocanate hydratase, found in Caulobacter sp. (strain K31).